A 214-amino-acid polypeptide reads, in one-letter code: Adenylate kinase (214 aa).

Gly-10 to Thr-15 provides a ligand contact to ATP. The interval Ser-30–Val-59 is NMP. AMP contacts are provided by residues Thr-31, Arg-36, Gln-57–Val-59, Gly-85–Arg-88, and Gln-92. The interval Gly-122 to Asp-159 is LID. Residues Arg-123 and Thr-132–Tyr-133 contribute to the ATP site. Positions 156 and 167 each coordinate AMP. Residue Lys-200 coordinates ATP.

Belongs to the adenylate kinase family. Monomer.

It localises to the cytoplasm. It catalyses the reaction AMP + ATP = 2 ADP. The protein operates within purine metabolism; AMP biosynthesis via salvage pathway; AMP from ADP: step 1/1. Its function is as follows. Catalyzes the reversible transfer of the terminal phosphate group between ATP and AMP. Plays an important role in cellular energy homeostasis and in adenine nucleotide metabolism. The polypeptide is Adenylate kinase (Aliivibrio fischeri (strain ATCC 700601 / ES114) (Vibrio fischeri)).